A 523-amino-acid polypeptide reads, in one-letter code: REST corepressor 2 (523 aa).

Residues 1–43 (MPSVMEKPSAGSGILSRSRAKTAPNGGQPHSEDDSSEEEHSHD) form a disordered region. Basic and acidic residues predominate over residues 30–43 (HSEDDSSEEEHSHD). Serine 31, serine 35, serine 36, and serine 63 each carry phosphoserine. Positions 44–129 (SMIRVGTNYQ…KSLADLANFT (86 aa)) constitute an ELM2 domain. Lysine 88 participates in a covalent cross-link: Glycyl lysine isopeptide (Lys-Gly) (interchain with G-Cter in SUMO2). An SANT 1 domain is found at 130–181 (PFPDEWTVEDKVLFEQAFGFHGKCFQRIQQMLPDKVIPSLVKYYYSWKKTRS). The interval 185–244 (VMDRQARRLGGRKDKEDSDELEEGRGAVSEGEPDTGDPKREPLPSRPLNARPGPGKKEVQ) is disordered. Serine 202 bears the Phosphoserine mark. Positions 283-314 (TLRGLDSQLISLKRQVQSMKQTNSSLRQALEG) form a coiled coil. The SANT 2 domain occupies 327-378 (KFNSRWTTDEQLLAVQAIRRYGKDFGAIAEVIGNKTLTQVKTFFVSYRRRFN). The interval 387–523 (EAEQDGAPAA…APLEPPAPSL (137 aa)) is disordered. The segment covering 432 to 459 (SVPPAPPPPPPPTSLSQPPPLLRPPLPT) has biased composition (pro residues). Residues 460-482 (APTLLRQPPPLQQGRFLQPRLAP) show a composition bias toward low complexity. Residue arginine 479 is modified to Asymmetric dimethylarginine. Pro residues predominate over residues 504–523 (GPQPPPTLVGAPLEPPAPSL).

This sequence belongs to the CoREST family. In terms of tissue distribution, predominantly, but not exclusively, expressed in neural tissue. Strongly expressed in neural domains of the developing brain of the developing mouse CNS.

The protein localises to the nucleus. Its function is as follows. May act as a component of a corepressor complex that represses transcription. The chain is REST corepressor 2 (Rcor2) from Mus musculus (Mouse).